The primary structure comprises 142 residues: Large ribosomal subunit protein uL11 (142 aa).

It belongs to the universal ribosomal protein uL11 family. Part of the ribosomal stalk of the 50S ribosomal subunit. Interacts with L10 and the large rRNA to form the base of the stalk. L10 forms an elongated spine to which L12 dimers bind in a sequential fashion forming a multimeric L10(L12)X complex. Post-translationally, one or more lysine residues are methylated.

In terms of biological role, forms part of the ribosomal stalk which helps the ribosome interact with GTP-bound translation factors. The polypeptide is Large ribosomal subunit protein uL11 (Photobacterium profundum (strain SS9)).